Reading from the N-terminus, the 301-residue chain is HTH-type transcriptional activator NagR (301 aa).

Residues 6 to 63 (IDLNLLVVFNQLLLDRSVSTAGEKLGLTQPAVSNSLKRLRAALKDDLFLRTSKGMEPT) form the HTH lysR-type domain. A DNA-binding region (H-T-H motif) is located at residues 23 to 42 (VSTAGEKLGLTQPAVSNSLK).

This sequence belongs to the LysR transcriptional regulatory family.

May regulate the expression of the naphthalene (nagA-F) and salicylate (nagG-M) metabolism genes. The chain is HTH-type transcriptional activator NagR from Ralstonia sp.